Consider the following 342-residue polypeptide: Ribosomal RNA small subunit methyltransferase C (342 aa).

This sequence belongs to the methyltransferase superfamily. RsmC family. As to quaternary structure, monomer.

It is found in the cytoplasm. The catalysed reaction is guanosine(1207) in 16S rRNA + S-adenosyl-L-methionine = N(2)-methylguanosine(1207) in 16S rRNA + S-adenosyl-L-homocysteine + H(+). Its function is as follows. Specifically methylates the guanine in position 1207 of 16S rRNA in the 30S particle. The chain is Ribosomal RNA small subunit methyltransferase C from Shewanella sp. (strain MR-4).